A 945-amino-acid polypeptide reads, in one-letter code: Netrin receptor UNC5B (945 aa).

The N-terminal stretch at 1–26 (MGARSGARGALLLALLLCWDPRLSQA) is a signal peptide. Residues 27–377 (GTDSGSEVLP…LEASGDAALY (351 aa)) lie on the Extracellular side of the membrane. The Ig-like domain occupies 48-145 (PYFLQEPQDA…AGTTKSRRAY (98 aa)). Disulfide bonds link Cys69–Cys130, Cys81–Cys128, Cys174–Cys225, Cys258–Cys295, Cys262–Cys299, Cys273–Cys285, Cys314–Cys348, Cys318–Cys353, and Cys326–Cys338. The 96-residue stretch at 147–242 (RIAYLRKNFD…KRRSTTATVI (96 aa)) folds into the Ig-like C2-type domain. A glycan (N-linked (GlcNAc...) asparagine) is linked at Asn222. TSP type-1 domains lie at 246-300 (NGGW…TICP) and 302-354 (DGAW…GLCM). The N-linked (GlcNAc...) asparagine glycan is linked to Asn347. Residues 378–398 (AGLVVAIFVVVAILMAVGVVV) form a helical membrane-spanning segment. Residues 399–945 (YRRNCRDFDT…LVAVATDGDC (547 aa)) are Cytoplasmic-facing. Cys403 carries S-palmitoyl cysteine lipidation. One can recognise a ZU5 domain in the interval 543–686 (SSVSGTFGCL…LGTYVFTGES (144 aa)). Tyr581 bears the Phosphotyrosine mark. A UPA domain region spans residues 689-838 (RSAVKRLQLA…AETPAGSLDT (150 aa)). The interaction with DCC stretch occupies residues 707–725 (SLEYSLRVYCLEDTPVALK). Residues 865-943 (KICNSLDAPN…EMLVAVATDG (79 aa)) form the Death domain.

The protein belongs to the unc-5 family. In terms of assembly, interacts with the cytoplasmic part of DCC. Interacts with GNAI2 via its cytoplasmic part. Interacts (via death domain) with DAPK1 (via death domain). Interacts (via extracellular domain) with FLRT3 (via extracellular domain); the interaction is direct. Interacts (via extracellular domain) with FLRT2 and FLRT3 (via extracellular domain), but has higher affinity for FLRT3. Identified in a complex with FLRT3 and ADGRL3; does not interact with ADGRL3 by itself. Post-translationally, phosphorylated on cytoplasmic tyrosine residues. Proteolytically cleaved by caspases during apoptosis. The cleavage does not take place when the receptor is associated with netrin ligand. Its cleavage by caspases is required to induce apoptosis. In terms of processing, palmitoylation is required for pro-apoptotic activity, but not for location at lipid rafts. As to expression, highly expressed in brain. Also expressed at lower level in developing lung, cartilage, kidney and hematopoietic and immune tissues.

Its subcellular location is the cell membrane. It localises to the membrane raft. In terms of biological role, receptor for netrin required for axon guidance. Mediates axon repulsion of neuronal growth cones in the developing nervous system upon ligand binding. Axon repulsion in growth cones may be caused by its association with DCC that may trigger signaling for repulsion. Functions as a netrin receptor that negatively regulates vascular branching during angiogenesis. Mediates retraction of tip cell filopodia on endothelial growth cones in response to netrin. It also acts as a dependence receptor required for apoptosis induction when not associated with netrin ligand. Mediates apoptosis by activating DAPK1. In the absence of NTN1, activates DAPK1 by reducing its autoinhibitory phosphorylation at Ser-308 thereby increasing its catalytic activity. The protein is Netrin receptor UNC5B (UNC5B) of Homo sapiens (Human).